We begin with the raw amino-acid sequence, 279 residues long: 4-hydroxy-3-methylbut-2-enyl diphosphate reductase (279 aa).

Cysteine 12 serves as a coordination point for [4Fe-4S] cluster. The (2E)-4-hydroxy-3-methylbut-2-enyl diphosphate site is built by histidine 41 and histidine 74. Dimethylallyl diphosphate is bound by residues histidine 41 and histidine 74. Isopentenyl diphosphate is bound by residues histidine 41 and histidine 74. Cysteine 96 serves as a coordination point for [4Fe-4S] cluster. Histidine 124 contributes to the (2E)-4-hydroxy-3-methylbut-2-enyl diphosphate binding site. Residue histidine 124 participates in dimethylallyl diphosphate binding. Residue histidine 124 participates in isopentenyl diphosphate binding. Catalysis depends on glutamate 126, which acts as the Proton donor. A (2E)-4-hydroxy-3-methylbut-2-enyl diphosphate-binding site is contributed by threonine 164. [4Fe-4S] cluster is bound at residue cysteine 192. (2E)-4-hydroxy-3-methylbut-2-enyl diphosphate-binding residues include serine 220, serine 221, asparagine 222, and serine 263. The dimethylallyl diphosphate site is built by serine 220, serine 221, asparagine 222, and serine 263. Isopentenyl diphosphate is bound by residues serine 220, serine 221, asparagine 222, and serine 263.

The protein belongs to the IspH family. It depends on [4Fe-4S] cluster as a cofactor.

It carries out the reaction isopentenyl diphosphate + 2 oxidized [2Fe-2S]-[ferredoxin] + H2O = (2E)-4-hydroxy-3-methylbut-2-enyl diphosphate + 2 reduced [2Fe-2S]-[ferredoxin] + 2 H(+). The enzyme catalyses dimethylallyl diphosphate + 2 oxidized [2Fe-2S]-[ferredoxin] + H2O = (2E)-4-hydroxy-3-methylbut-2-enyl diphosphate + 2 reduced [2Fe-2S]-[ferredoxin] + 2 H(+). It participates in isoprenoid biosynthesis; dimethylallyl diphosphate biosynthesis; dimethylallyl diphosphate from (2E)-4-hydroxy-3-methylbutenyl diphosphate: step 1/1. Its pathway is isoprenoid biosynthesis; isopentenyl diphosphate biosynthesis via DXP pathway; isopentenyl diphosphate from 1-deoxy-D-xylulose 5-phosphate: step 6/6. Catalyzes the conversion of 1-hydroxy-2-methyl-2-(E)-butenyl 4-diphosphate (HMBPP) into a mixture of isopentenyl diphosphate (IPP) and dimethylallyl diphosphate (DMAPP). Acts in the terminal step of the DOXP/MEP pathway for isoprenoid precursor biosynthesis. This is 4-hydroxy-3-methylbut-2-enyl diphosphate reductase from Clostridioides difficile (strain 630) (Peptoclostridium difficile).